Reading from the N-terminus, the 669-residue chain is DNA mismatch repair protein MutL (669 aa).

A disordered region spans residues 356 to 382 (FEQRQNTENNQEKTFSSEESNSKPFME). The segment covering 361 to 378 (NTENNQEKTFSSEESNSK) has biased composition (polar residues).

The protein belongs to the DNA mismatch repair MutL/HexB family.

Its function is as follows. This protein is involved in the repair of mismatches in DNA. It is required for dam-dependent methyl-directed DNA mismatch repair. May act as a 'molecular matchmaker', a protein that promotes the formation of a stable complex between two or more DNA-binding proteins in an ATP-dependent manner without itself being part of a final effector complex. In Staphylococcus aureus (strain USA300), this protein is DNA mismatch repair protein MutL.